Consider the following 295-residue polypeptide: Proline iminopeptidase (295 aa).

Residues 29–279 form the AB hydrolase-1 domain; sequence PLLLLHGGPG…GCGHMPFVQE (251 aa). The active-site Nucleophile is serine 107. The active site involves aspartate 246. The Proton donor role is filled by histidine 273.

Belongs to the peptidase S33 family.

It is found in the cell envelope. The catalysed reaction is Release of N-terminal proline from a peptide.. In terms of biological role, releases the N-terminal proline from various substrates. In Lactobacillus delbrueckii subsp. bulgaricus (strain ATCC 11842 / DSM 20081 / BCRC 10696 / JCM 1002 / NBRC 13953 / NCIMB 11778 / NCTC 12712 / WDCM 00102 / Lb 14), this protein is Proline iminopeptidase.